Here is a 958-residue protein sequence, read N- to C-terminus: Voltage-gated inwardly rectifying potassium channel KCNH6 (958 aa).

Over 1–261 (MPVRRGHVAP…YSPFKAVWDW (261 aa)) the chain is Cytoplasmic. The PAS domain maps to 41–70 (IIYCNDGFCELFGYSRVEVMQQPCTCDFLT). A PAC domain is found at 92-144 (CKVDILYYRKDASSFRCLVDVVPVKNEDGAVIMFILNFEDLAQLLAKCSSRSL). A helical transmembrane segment spans residues 262 to 282 (LILLLVIYTAVFTPYSAAFLL). The Extracellular segment spans residues 283–298 (SDQDESRRGACSYTCS). A helical transmembrane segment spans residues 299–319 (PLTVVDLIVDIMFVVDIVINF). Over 320 to 340 (RTTYVNTNDEVVSHPRRIAVH) the chain is Cytoplasmic. The helical transmembrane segment at 341-361 (YFKGWFLIDMVAAIPFDLLIF) threads the bilayer. Residues 362-370 (RTGSDETTT) lie on the Extracellular side of the membrane. The helical; Voltage-sensor transmembrane segment at 371–391 (LIGLLKTARLLRLVRVARKLD) threads the bilayer. The Cytoplasmic segment spans residues 392-398 (RYSEYGA). The chain crosses the membrane as a helical span at residues 399 to 419 (AVLFLLMCTFALIAHWLACIW). Topologically, residues 420 to 463 (YAIGNVERPYLEHKIGWLDSLGVQLGKRYNGSDPASGPSVQDKY) are extracellular. N-linked (GlcNAc...) (complex) asparagine glycosylation is present at N449. The pore-forming intramembrane region spans 464-484 (VTALYFTFSSLTSVGFGNVSP). The Selectivity filter signature appears at 476–481 (SVGFGN). Residues 485-490 (NTNSEK) are Extracellular-facing. Residues 491–511 (VFSICVMLIGSLMYASIFGNV) traverse the membrane as a helical segment. Topologically, residues 512–958 (SAIIQRLYSG…DPGFAGSWGH (447 aa)) are cytoplasmic. The interval 594–694 (AFSGAGKGCL…IQRADLLEVL (101 aa)) is cNMP-binding domain. 2 disordered regions span residues 720–751 (GLHS…PPLS) and 845–910 (TTSP…PPLA). Residues 724–745 (SPRQAPGSQDHQGFFLSDNQSD) show a composition bias toward polar residues.

The protein belongs to the potassium channel family. H (Eag) (TC 1.A.1.20) subfamily. Kv11.2/KCNH6 sub-subfamily. As to quaternary structure, the potassium channel is probably composed of a homo- or heterotetrameric complex of pore-forming alpha subunits that can associate only within their subfamily. Expressed in prolactin-secreting adenomas.

Its subcellular location is the cell membrane. It catalyses the reaction K(+)(in) = K(+)(out). In terms of biological role, pore-forming (alpha) subunit of voltage-gated inwardly rectifying potassium channel. Characterized by unusual gating kinetics by producing relatively small outward currents during membrane depolarization and large inward currents during subsequent repolarization which reflect a rapid inactivation during depolarization and quick recovery from inactivation but slow deactivation (closing) during repolarization. Activates even more slowly than KCNH2. The protein is Voltage-gated inwardly rectifying potassium channel KCNH6 of Homo sapiens (Human).